The following is a 390-amino-acid chain: Argininosuccinate synthase (390 aa).

Ser-6 to Thr-14 lines the ATP pocket. Residue Tyr-83 participates in L-citrulline binding. An ATP-binding site is contributed by Gly-113. Positions 115, 119, and 120 each coordinate L-aspartate. Asn-119 is an L-citrulline binding site. Residues Arg-123, Ser-169, Ser-178, Glu-254, and Tyr-266 each coordinate L-citrulline.

This sequence belongs to the argininosuccinate synthase family. Type 1 subfamily. In terms of assembly, homotetramer.

The protein resides in the cytoplasm. It catalyses the reaction L-citrulline + L-aspartate + ATP = 2-(N(omega)-L-arginino)succinate + AMP + diphosphate + H(+). Its pathway is amino-acid biosynthesis; L-arginine biosynthesis; L-arginine from L-ornithine and carbamoyl phosphate: step 2/3. The sequence is that of Argininosuccinate synthase from Archaeoglobus fulgidus (strain ATCC 49558 / DSM 4304 / JCM 9628 / NBRC 100126 / VC-16).